A 391-amino-acid polypeptide reads, in one-letter code: MYQTLTITSAQGPLSYDPSPGTFMHSAASSPVYVPTSRVGSMLTSISYLQGTGASQGAHSVNSHWSQATSESSSFNNSSPHTSSRYHYPPSPPMHNGSTRDTGYSSSLTVSSRDQYTPLARSLNGSYGSHYTPYMAPQLTSAWPAGPFDNTMLHSLQSRGAPISVRGAPGDVLDELPESRECVNCGSVQTPLWRRDGTGHFLCNACGLYSKMNGLSRPLIKPQKRVPSSRRIGLACANCHTSTTTLWRRNTEGEPVCNACGLYMKLHGVPRPLAMKKEGIQTRKRKPKTLNKSKSSSSNGNSSHQISMTPTSTTSSTNSDDCIKNGSPSQNTTPVVASSLMSTQQTESTSPNSNTLKYTGQDGLYSAVSLSSASEVAASVRQDSWCALALA.

Positions 57 to 111 (GAHSVNSHWSQATSESSSFNNSSPHTSSRYHYPPSPPMHNGSTRDTGYSSSLTVS) are disordered. The segment covering 66-83 (SQATSESSSFNNSSPHTS) has biased composition (low complexity). A compositionally biased stretch (polar residues) spans 96–111 (NGSTRDTGYSSSLTVS). GATA-type zinc fingers lie at residues 182 to 206 (CVNC…CNAC) and 236 to 260 (CANC…CNAC). The tract at residues 274–355 (AMKKEGIQTR…TESTSPNSNT (82 aa)) is disordered. A compositionally biased stretch (basic residues) spans 282–291 (TRKRKPKTLN). Over residues 292–319 (KSKSSSSNGNSSHQISMTPTSTTSSTNS) the composition is skewed to low complexity. Over residues 326 to 355 (GSPSQNTTPVVASSLMSTQQTESTSPNSNT) the composition is skewed to polar residues.

As to expression, in embryos, expressed in the presumptive heart mesoderm. In adults, expressed at high levels in heart, small intestine, and stomach and at lower levels in lung, pancreas and colon.

Its subcellular location is the nucleus. In terms of biological role, transcriptional activator that binds 5'-GATA-3'-containing motifs within gene promoters. Regulates cardiac-specific transcription during embryogenesis and thereby cardiogenesis. This Xenopus laevis (African clawed frog) protein is GATA-binding factor 6-A (gata6-a).